A 207-amino-acid chain; its full sequence is Ras-related protein Rab-8A (207 aa).

GTP contacts are provided by Ser17, Gly18, Val19, Gly20, Lys21, Thr22, Cys23, Ser35, Ser39, and Thr40. Thr22 lines the Mg(2+) pocket. Short sequence motifs (switch) lie at residues 31–45 and 63–80; these read DAFNSTFISTIGIDF and DTAGQERFRTITTAYYRG. Residues Thr40 and Asp63 each contribute to the Mg(2+) site. Gly66 contacts GTP. Residue Thr72 is modified to Phosphothreonine. 5 residues coordinate GTP: Asn121, Lys122, Asp124, Ala152, and Lys153. A phosphoserine mark is found at Ser181 and Ser185. Cys204 carries the post-translational modification Cysteine methyl ester. Residue Cys204 is the site of S-geranylgeranyl cysteine attachment. The propeptide at 205 to 207 is removed in mature form; the sequence is VLL.

The protein belongs to the small GTPase superfamily. Rab family. In terms of assembly, interacts (GTP-bound form) with MICALL1; regulates RAB8A association with recycling endosomes. Interacts with MICALL2; competes with RAB13 and is involved in E-cadherin endocytic recycling. Interacts (GTP-bound form) with MICAL1, MICALCL, MICAL3, EHBP1 and EHBP1L1; at least in case of MICAL1, MICALCL, MICAL3 and EHBP1L1 two molecules of RAB8A can bind to one molecule of the effector protein; ternary complexes of RAB8A, RAB13 and either MICAL1 or EHBP1L1 are possible. Interacts with EHD1. Interacts with MAP4K2 and SYTL4. Interacts with SGSM1 and SGSM3. Interacts with RABIF, RIMS2, RPH3A and RPH3A. Interacts with OPTN. Interacts with RAB3IP, RAB3IP functions as guanine exchange factor (GEF). Interacts with MYO5B. Interacts with CIMAP3. Interacts with BIRC6/bruce. Interacts with OCRL. Interacts with AHI1. Interacts with DCDC1. Interacts with LRRK2; interaction facilitates phosphorylation of Thr-72. Interacts with RAB31P, GDI1, GDI2, CHM, CHML, RABGGTA, RABGGTB, TBC1D15 and INPP5B; these interactions are dependent on Thr-72 not being phosphorylated. Interacts with RILPL1 and RILPL2; these interactions are dependent on the phosphorylation of Thr-72 by LRRK2. Interacts with DZIP1; prevents inhibition by the GDP-dissociation inhibitor GDI2. Interacts (in GDP-bound form) with RAB3IP/Rabin8, RAB3IP functions as guanine exchange factor (GEF) towards RAB8A. Interacts (in GDP-bound form) with RPGR, RPGR functions as GEF towards RAB8A. It depends on Mg(2+) as a cofactor. Post-translationally, phosphorylation of Thr-72 in the switch II region by LRRK2 prevents the association of RAB regulatory proteins, including CHM, CHML and RAB GDP dissociation inhibitors GDI1 and GDI2. Phosphorylation by LRRK2 is required for localization to stressed lysosomes.

It is found in the cell membrane. The protein localises to the golgi apparatus. It localises to the endosome membrane. The protein resides in the recycling endosome membrane. Its subcellular location is the cell projection. It is found in the cilium. The protein localises to the cytoplasmic vesicle. It localises to the phagosome membrane. The protein resides in the cytoplasm. Its subcellular location is the cytoskeleton. It is found in the microtubule organizing center. The protein localises to the centrosome. It localises to the centriole. The protein resides in the cilium basal body. Its subcellular location is the midbody. It is found in the lysosome. The catalysed reaction is GTP + H2O = GDP + phosphate + H(+). With respect to regulation, regulated by guanine nucleotide exchange factors (GEFs) such as RAB3IP/Rabin8 and RPGR which promote the exchange of bound GDP for free GTP, GTPase activating proteins (GAPs) which increase the GTP hydrolysis activity, and GDP dissociation inhibitors (GDIs) which inhibit the dissociation of the nucleotide from the GTPase. Activated in response to insulin. Its function is as follows. The small GTPases Rab are key regulators of intracellular membrane trafficking, from the formation of transport vesicles to their fusion with membranes. Rabs cycle between an inactive GDP-bound form and an active GTP-bound form that is able to recruit to membranes different sets of downstream effectors directly responsible for vesicle formation, movement, tethering and fusion. RAB8A is involved in polarized vesicular trafficking and neurotransmitter release. Together with RAB11A, RAB3IP, the exocyst complex, PARD3, PRKCI, ANXA2, CDC42 and DNMBP promotes transcytosis of PODXL to the apical membrane initiation sites (AMIS), apical surface formation and lumenogenesis. Regulates the compacted morphology of the Golgi. Together with MYO5B and RAB11A participates in epithelial cell polarization. Also involved in membrane trafficking to the cilium and ciliogenesis. Together with MICALL2, may also regulate adherens junction assembly. May play a role in insulin-induced transport to the plasma membrane of the glucose transporter GLUT4 and therefore play a role in glucose homeostasis. Involved in autophagy. Participates in the export of a subset of neosynthesized proteins through a Rab8-Rab10-Rab11-dependent endososomal export route. Targeted to and stabilized on stressed lysosomes through LRRK2 phosphorylation. Suppresses stress-induced lysosomal enlargement through EHBP1 and EHNP1L1 effector proteins. The chain is Ras-related protein Rab-8A (RAB8A) from Bos taurus (Bovine).